Reading from the N-terminus, the 1035-residue chain is Protein hir-1 (1035 aa).

WD repeat units follow at residues 15 to 54 (QKDF…NSHD), 68 to 107 (HHLG…PSHT), 129 to 168 (GHDN…KLKT), 171 to 210 (VHQS…PNAT), 232 to 275 (PLTT…SEIN), 299 to 338 (DENS…PVLI), and 342 to 383 (IASK…WVAK). A disordered region spans residues 393–479 (KYGGSRKGMG…PEEESADKTA (87 aa)). The span at 408–425 (DGLHLENHSKEKELRGAE) shows a compositional bias: basic and acidic residues.

The protein belongs to the WD repeat HIR1 family.

It is found in the nucleus. Required for replication-independent chromatin assembly and for the periodic repression of histone gene transcription during the cell cycle. The chain is Protein hir-1 (hir-1) from Neurospora crassa (strain ATCC 24698 / 74-OR23-1A / CBS 708.71 / DSM 1257 / FGSC 987).